We begin with the raw amino-acid sequence, 264 residues long: tRNA (guanine-N(1)-)-methyltransferase (264 aa).

149–154 (IGDYVL) contributes to the S-adenosyl-L-methionine binding site.

Belongs to the RNA methyltransferase TrmD family. As to quaternary structure, homodimer.

The protein resides in the cytoplasm. It catalyses the reaction guanosine(37) in tRNA + S-adenosyl-L-methionine = N(1)-methylguanosine(37) in tRNA + S-adenosyl-L-homocysteine + H(+). Its function is as follows. Specifically methylates guanosine-37 in various tRNAs. The sequence is that of tRNA (guanine-N(1)-)-methyltransferase from Methylobacillus flagellatus (strain ATCC 51484 / DSM 6875 / VKM B-1610 / KT).